The primary structure comprises 248 residues: Methionine aminopeptidase (248 aa).

Histidine 77 serves as a coordination point for substrate. Residues aspartate 94, aspartate 105, and histidine 169 each contribute to the a divalent metal cation site. Position 176 (histidine 176) interacts with substrate. 2 residues coordinate a divalent metal cation: glutamate 202 and glutamate 233.

This sequence belongs to the peptidase M24A family. Methionine aminopeptidase type 1 subfamily. In terms of assembly, monomer. The cofactor is Co(2+). Zn(2+) is required as a cofactor. Mn(2+) serves as cofactor. Requires Fe(2+) as cofactor.

The catalysed reaction is Release of N-terminal amino acids, preferentially methionine, from peptides and arylamides.. In terms of biological role, removes the N-terminal methionine from nascent proteins. The N-terminal methionine is often cleaved when the second residue in the primary sequence is small and uncharged (Met-Ala-, Cys, Gly, Pro, Ser, Thr, or Val). Requires deformylation of the N(alpha)-formylated initiator methionine before it can be hydrolyzed. The sequence is that of Methionine aminopeptidase from Mycoplasma genitalium (strain ATCC 33530 / DSM 19775 / NCTC 10195 / G37) (Mycoplasmoides genitalium).